The sequence spans 289 residues: Bifunctional protein FolD 2 (289 aa).

NADP(+) is bound by residues 162-164 (GRS), S187, and I228.

The protein belongs to the tetrahydrofolate dehydrogenase/cyclohydrolase family. In terms of assembly, homodimer.

It carries out the reaction (6R)-5,10-methylene-5,6,7,8-tetrahydrofolate + NADP(+) = (6R)-5,10-methenyltetrahydrofolate + NADPH. The enzyme catalyses (6R)-5,10-methenyltetrahydrofolate + H2O = (6R)-10-formyltetrahydrofolate + H(+). It participates in one-carbon metabolism; tetrahydrofolate interconversion. Functionally, catalyzes the oxidation of 5,10-methylenetetrahydrofolate to 5,10-methenyltetrahydrofolate and then the hydrolysis of 5,10-methenyltetrahydrofolate to 10-formyltetrahydrofolate. This is Bifunctional protein FolD 2 from Deinococcus geothermalis (strain DSM 11300 / CIP 105573 / AG-3a).